The primary structure comprises 357 residues: Probable butyrate kinase (357 aa).

The protein belongs to the acetokinase family.

It is found in the cytoplasm. The catalysed reaction is butanoate + ATP = butanoyl phosphate + ADP. The polypeptide is Probable butyrate kinase (Thermotoga petrophila (strain ATCC BAA-488 / DSM 13995 / JCM 10881 / RKU-1)).